Consider the following 213-residue polypeptide: Orotate phosphoribosyltransferase (213 aa).

Residue lysine 26 coordinates 5-phospho-alpha-D-ribose 1-diphosphate. 34–35 (FF) is an orotate binding site. Residues 72–73 (YK), arginine 98, lysine 99, lysine 102, histidine 104, and 123–131 (DDVISAGTS) each bind 5-phospho-alpha-D-ribose 1-diphosphate. Serine 127 and arginine 155 together coordinate orotate.

The protein belongs to the purine/pyrimidine phosphoribosyltransferase family. PyrE subfamily. In terms of assembly, homodimer. Requires Mg(2+) as cofactor.

The catalysed reaction is orotidine 5'-phosphate + diphosphate = orotate + 5-phospho-alpha-D-ribose 1-diphosphate. The protein operates within pyrimidine metabolism; UMP biosynthesis via de novo pathway; UMP from orotate: step 1/2. In terms of biological role, catalyzes the transfer of a ribosyl phosphate group from 5-phosphoribose 1-diphosphate to orotate, leading to the formation of orotidine monophosphate (OMP). The sequence is that of Orotate phosphoribosyltransferase from Neisseria meningitidis serogroup C (strain 053442).